An 889-amino-acid polypeptide reads, in one-letter code: MVAVASSSSAASAPRSGEEIREAFLNFYAERGHKRMASASLIPDDPTVLLTIAGMLPFKPVFLGQQERPAPRATSSQKCIRTNDIENVGRTARHHTFFEMLGNFSFGDYFKQRAIEWAWELSTGVYGIDPKNLVVSVFREDDEAELIWRDVVGVNPKRIIRMDEADNFWASGPTGPCGPCSEIYYDFKPELGDEDIDLEDDDRFIEFYNLVFMQYNRDAEGTLTPLANRNIDTGMGLERMAQILQKVPNNYETDLIFPLIQAAADLAGVDYHQLNDKGKTSLKVIGDHSRAVTQLICDGVTASNLGRGYILRRLLRRVVRHGRLLGIDKPFLVTMGEAAIALLKGAHPSVIERQEVILAELQREEARFLETLERGEKLLAEVLASKPTQISGAQAFELYDTYGFPLELTQEIAEEQGLAVDLDGFEAAMEEQRQRAKAAAVSIDLTLQDAIDQVVADQAATCFEGYEALDHASCVQALVVNGGPSTTAKAGDAVQVVLDTTPFYGEGGGQVGDRGVLAGSDLIVRIESVSRSRDVFVHAGRVERGELALGDTVKAQVDRACRRRAQANHTATHLLQAALKQVVDPGIGQAGSLVDFDRLRFDFHCPTAVTPDQLQQVETLINGWINEAHALQVQEMAIDQAKAAGAVAMFGEKYADVVRVVDVPGVSMELCGGTHVTNTAEIGLFKIVAESGVAAGIRRIEAVAGPAVLAYLNERDVVVKQLGDRFKAQPAEIVDRVAALQEELKATGKALAAAQAELAVAKAGALAAKAEAVGDFQLLVERLDGVDGAGLQGAAQSLADQLGDGAAVVIGGLPDPGDMGKVILVAAFGQQVIAAKLQAGKFIGGIAKQCGGGGGGRPNLAQAGGRDGAALPGALDAAQAELTSAFRAL.

Zn(2+) is bound by residues His-569, His-573, Cys-671, and His-675.

The protein belongs to the class-II aminoacyl-tRNA synthetase family. Zn(2+) is required as a cofactor.

It is found in the cytoplasm. It carries out the reaction tRNA(Ala) + L-alanine + ATP = L-alanyl-tRNA(Ala) + AMP + diphosphate. Catalyzes the attachment of alanine to tRNA(Ala) in a two-step reaction: alanine is first activated by ATP to form Ala-AMP and then transferred to the acceptor end of tRNA(Ala). Also edits incorrectly charged Ser-tRNA(Ala) and Gly-tRNA(Ala) via its editing domain. The polypeptide is Alanine--tRNA ligase (Synechococcus sp. (strain CC9605)).